The primary structure comprises 22 residues: Melittin-like peptide (22 aa).

Glutamine amide is present on Q22.

Expressed by the skin dorsal glands.

The protein resides in the secreted. The protein is Melittin-like peptide of Rana temporaria (European common frog).